The chain runs to 235 residues: 1-(5-phosphoribosyl)-5-[(5-phosphoribosylamino)methylideneamino] imidazole-4-carboxamide isomerase (235 aa).

Catalysis depends on Asp8, which acts as the Proton acceptor. The Proton donor role is filled by Asp128.

Belongs to the HisA/HisF family.

The protein localises to the cytoplasm. The catalysed reaction is 1-(5-phospho-beta-D-ribosyl)-5-[(5-phospho-beta-D-ribosylamino)methylideneamino]imidazole-4-carboxamide = 5-[(5-phospho-1-deoxy-D-ribulos-1-ylimino)methylamino]-1-(5-phospho-beta-D-ribosyl)imidazole-4-carboxamide. It participates in amino-acid biosynthesis; L-histidine biosynthesis; L-histidine from 5-phospho-alpha-D-ribose 1-diphosphate: step 4/9. In Thermus thermophilus (strain ATCC BAA-163 / DSM 7039 / HB27), this protein is 1-(5-phosphoribosyl)-5-[(5-phosphoribosylamino)methylideneamino] imidazole-4-carboxamide isomerase.